The sequence spans 553 residues: MPTEPETDYDPELGRKFIFVTGGVMSGLGKGITAASTGRLLKNAGFDVTAVKIDPYLNVDAGTMNPFQHGEVYVLKDGGEVDLDLGNYERFLDIDMTFDHNVTTGKTYQHVIEKERSGDYLGRTVQIIPHITDDIKRRIREAAEGNDVCIIEVGGTVGDIEGMPYLEALRQFAHEEDEDDILFTHVTLVPYSKNGEQKTKPTQHSVKELRSIGLQPDILVGRCSDKLDIDTKEKIGLFCDVPTEAVFSNPDVDDIYHVPLMVEEEGLDQYVMEELDIASEALPEDERENRWRDLVTQNTEGEVEVALVGKYDLEDAYMSVHEALKHAGLEKNVDVNVRWVNSEKMNDHHADRMREADAIVVPGGFGARGTEGKIEAIRYARENDIPFLGLCLGFQMAVVEYARNVLDLDDAHSAELEEDTPHPVIDILPEQYEIEDMGGTMRLGAHETEINANTLAATLYGGESCTERHRHRYEVNPEYIDDLEAAGLKFSGRAGNRMEILELGPEDHPYFIGTQFHPEFRSRPTRASPPFVGLLEAVLGDDPHTATTEEVSH.

Positions 1–277 (MPTEPETDYD…DQYVMEELDI (277 aa)) are amidoligase domain. A CTP-binding site is contributed by Ser26. Ser26 is a binding site for UTP. ATP-binding positions include 27 to 32 (GLGKGI) and Asp84. Residues Asp84 and Glu152 each contribute to the Mg(2+) site. CTP-binding positions include 159–161 (DIE), 198–203 (KTKPTQ), and Lys234. Residues 198-203 (KTKPTQ) and Lys234 contribute to the UTP site. The region spanning 307–544 (LVGKYDLEDA…LEAVLGDDPH (238 aa)) is the Glutamine amidotransferase type-1 domain. L-glutamine is bound at residue Gly364. Cys391 acts as the Nucleophile; for glutamine hydrolysis in catalysis. L-glutamine is bound by residues 392–395 (LGFQ), Glu415, and Arg472. Active-site residues include His517 and Glu519.

It belongs to the CTP synthase family. In terms of assembly, homotetramer.

The enzyme catalyses UTP + L-glutamine + ATP + H2O = CTP + L-glutamate + ADP + phosphate + 2 H(+). The catalysed reaction is L-glutamine + H2O = L-glutamate + NH4(+). It catalyses the reaction UTP + NH4(+) + ATP = CTP + ADP + phosphate + 2 H(+). The protein operates within pyrimidine metabolism; CTP biosynthesis via de novo pathway; CTP from UDP: step 2/2. Its activity is regulated as follows. Allosterically activated by GTP, when glutamine is the substrate; GTP has no effect on the reaction when ammonia is the substrate. The allosteric effector GTP functions by stabilizing the protein conformation that binds the tetrahedral intermediate(s) formed during glutamine hydrolysis. Inhibited by the product CTP, via allosteric rather than competitive inhibition. Functionally, catalyzes the ATP-dependent amination of UTP to CTP with either L-glutamine or ammonia as the source of nitrogen. Regulates intracellular CTP levels through interactions with the four ribonucleotide triphosphates. The sequence is that of CTP synthase from Haloarcula marismortui (strain ATCC 43049 / DSM 3752 / JCM 8966 / VKM B-1809) (Halobacterium marismortui).